The following is a 256-amino-acid chain: 5-oxoprolinase subunit A 1 (256 aa).

This sequence belongs to the LamB/PxpA family. As to quaternary structure, forms a complex composed of PxpA, PxpB and PxpC.

The enzyme catalyses 5-oxo-L-proline + ATP + 2 H2O = L-glutamate + ADP + phosphate + H(+). Its function is as follows. Catalyzes the cleavage of 5-oxoproline to form L-glutamate coupled to the hydrolysis of ATP to ADP and inorganic phosphate. The polypeptide is 5-oxoprolinase subunit A 1 (Pseudomonas syringae pv. tomato (strain ATCC BAA-871 / DC3000)).